The primary structure comprises 617 residues: Mitochondrial Rho GTPase 2 (617 aa).

Topologically, residues 1–590 are cytoplasmic; the sequence is MKRDVRILLL…LNGSDMSSTS (590 aa). The region spanning 2–168 is the Miro 1 domain; it reads KRDVRILLLG…FYYAQKAVLH (167 aa). G16, K17, T18, and S19 together coordinate GTP. A Mg(2+)-binding site is contributed by T18. D57 lines the Mg(2+) pocket. S59, N118, K119, D121, A149, and K150 together coordinate GTP. 2 EF-hand domains span residues 184–219 and 304–339; these read QCVR…CFGN and LGHQ…LPYM. Residues D197, D199, D201, E208, D317, D319, D321, and E328 each contribute to the Ca(2+) site. Residues 416 to 578 form the Miro 2 domain; the sequence is RTVFLCKVIG…YSKLTWAAMY (163 aa). The GTP site is built by G428, G430, K431, and T432. Mg(2+)-binding residues include T432 and E474. Residues K528 and D530 each contribute to the GTP site. Residues 591-613 form a helical; Anchor for type IV membrane protein membrane-spanning segment; that stretch reads FWLRVTLGATIAAMLGFALYRAF. The Mitochondrial intermembrane segment spans residues 614–617; it reads SRHK.

It belongs to the mitochondrial Rho GTPase family. In terms of assembly, homodimer.

It is found in the mitochondrion outer membrane. The catalysed reaction is GTP + H2O = GDP + phosphate + H(+). It carries out the reaction ATP + H2O = ADP + phosphate + H(+). The enzyme catalyses UTP + H2O = UDP + phosphate + H(+). In terms of biological role, atypical mitochondrial nucleoside-triphosphatase (NTPase) involved in mitochondrial trafficking. Probably involved in control of anterograde transport of mitochondria and their subcellular distribution. Can hydrolyze GTP, ATP and UTP. The polypeptide is Mitochondrial Rho GTPase 2 (rhot2) (Danio rerio (Zebrafish)).